The sequence spans 290 residues: Picrinine-N-methytransferase TMT4 (290 aa).

The interval methionine 71–glycine 80 is SAM motif I. Positions aspartate 133–valine 139 match the Vacuolar targeting signal motif. The segment at glycine 134–isoleucine 142 is SAM motif II. The interval valine 161–isoleucine 170 is SAM motif III.

This sequence belongs to the class I-like SAM-binding methyltransferase superfamily. gTMT family. As to quaternary structure, homodimer.

The protein localises to the vacuole membrane. The enzyme catalyses picrinine + S-adenosyl-L-methionine = ervincine + S-adenosyl-L-homocysteine + H(+). Its pathway is alkaloid biosynthesis; vindoline biosynthesis. Functionally, S-adenosyl-L-methionine-dependent N-methyltransferase involved in the biosynthesis of biologically active monoterpenoid indole alkaloids (MIAs) natural products including vindoline. Catalyzes the conversion of picrinine to N-methylpicrinine (ervincine). This is Picrinine-N-methytransferase TMT4 from Catharanthus roseus (Madagascar periwinkle).